Reading from the N-terminus, the 61-residue chain is MKYTEIKDKTAAELATMLKEKKVLLFTLKQKLKTMQLTNPKEISQVKKDIARINTAINALR.

This sequence belongs to the universal ribosomal protein uL29 family.

In Campylobacter jejuni subsp. jejuni serotype O:6 (strain 81116 / NCTC 11828), this protein is Large ribosomal subunit protein uL29.